The chain runs to 242 residues: Small ribosomal subunit protein uS2 (242 aa).

The protein belongs to the universal ribosomal protein uS2 family.

This is Small ribosomal subunit protein uS2 from Shewanella pealeana (strain ATCC 700345 / ANG-SQ1).